Here is a 509-residue protein sequence, read N- to C-terminus: Histidine ammonia-lyase (509 aa).

The segment at residues 144 to 146 (ASG) is a cross-link (5-imidazolinone (Ala-Gly)). 2,3-didehydroalanine (Ser) is present on Ser145.

The protein belongs to the PAL/histidase family. Post-translationally, contains an active site 4-methylidene-imidazol-5-one (MIO), which is formed autocatalytically by cyclization and dehydration of residues Ala-Ser-Gly.

The protein localises to the cytoplasm. The enzyme catalyses L-histidine = trans-urocanate + NH4(+). It functions in the pathway amino-acid degradation; L-histidine degradation into L-glutamate; N-formimidoyl-L-glutamate from L-histidine: step 1/3. In Rhodospirillum centenum (strain ATCC 51521 / SW), this protein is Histidine ammonia-lyase.